The chain runs to 670 residues: Probable Rho-GTPase-activating protein 9 (670 aa).

The region spanning 3 to 392 (DGFSNSFWSR…SFKNLDSLRD (390 aa)) is the F-BAR domain. The interval 141–161 (NSKKSNLTDRKPIPTSRKSNK) is disordered. One can recognise a Rho-GAP domain in the interval 425–622 (SSLTEDNLIV…DLINEFENLF (198 aa)). T640 is subject to Phosphothreonine. Residues 641–663 (PITTSPQKLKLPRSSSPCKNPSP) are compositionally biased toward polar residues. Positions 641-670 (PITTSPQKLKLPRSSSPCKNPSPTRRFRPF) are disordered. S645 carries the phosphoserine modification.

It is found in the cytoplasm. This Schizosaccharomyces pombe (strain 972 / ATCC 24843) (Fission yeast) protein is Probable Rho-GTPase-activating protein 9 (rga9).